A 341-amino-acid polypeptide reads, in one-letter code: Phosphate acyltransferase (341 aa).

Belongs to the PlsX family. In terms of assembly, homodimer. Probably interacts with PlsY.

It localises to the cytoplasm. The enzyme catalyses a fatty acyl-[ACP] + phosphate = an acyl phosphate + holo-[ACP]. The protein operates within lipid metabolism; phospholipid metabolism. Its function is as follows. Catalyzes the reversible formation of acyl-phosphate (acyl-PO(4)) from acyl-[acyl-carrier-protein] (acyl-ACP). This enzyme utilizes acyl-ACP as fatty acyl donor, but not acyl-CoA. The polypeptide is Phosphate acyltransferase (Saccharophagus degradans (strain 2-40 / ATCC 43961 / DSM 17024)).